A 215-amino-acid chain; its full sequence is [PSI+] inducibility protein 3 (215 aa).

Residue Ser2 is modified to N-acetylserine. Phosphoserine occurs at positions 52 and 55. The SH3 domain occupies 54–113 (ASLEYVEALYQFDPQQDGDLGLKPGDKVQLLEKLSPEWYKGSCNGRTGIFPANYVKPAFS). Lys80 is covalently cross-linked (Glycyl lysine isopeptide (Lys-Gly) (interchain with G-Cter in ubiquitin)). The interval 114–189 (GSNGPSNLPP…HQSSHSHLKS (76 aa)) is disordered. Residues 124–127 (PPQY) carry the PY motif motif.

This sequence belongs to the LSB1 family. As to quaternary structure, interacts with LAS17, RSP5 and SUP35. In terms of processing, ubiquitinated by RSP5. Ubiquitination reduces the protein abundance and its prion-inducing ability.

It localises to the cytoplasm. It is found in the nucleus. Its subcellular location is the cytoskeleton. The protein resides in the actin patch. Functionally, overproduction promotes the de novo induction of the [PSI+] prion form of SUP35. The prion-inducing effect depends on the association with the actin cytoskeleton. Also implicated in prion maintenance during heat stress. This is [PSI+] inducibility protein 3 (PIN3) from Saccharomyces cerevisiae (strain ATCC 204508 / S288c) (Baker's yeast).